The sequence spans 415 residues: uncharacterized protein (415 aa).

One can recognise a TRAM domain in the interval 1–55 (MSTGTVTIDRLGAQGDGVARTEAGPVFAPFTLPGETVSLAVNKANGTLISLKEAS). Cys63, Cys75, Cys78, and Cys152 together coordinate [4Fe-4S] cluster. The S-adenosyl-L-methionine site is built by Gln252, Phe279, Glu299, and Asp347. The active-site Nucleophile is Cys373.

It belongs to the class I-like SAM-binding methyltransferase superfamily. RNA M5U methyltransferase family.

This is an uncharacterized protein from Rhizobium meliloti (strain 1021) (Ensifer meliloti).